The primary structure comprises 239 residues: Vesicle-associated protein 1-2 (239 aa).

The residue at position 1 (Met1) is an N-acetylmethionine. Residues 1–215 are Cytoplasmic-facing; the sequence is MSNELLTIDP…RRESKRSKSG (215 aa). Ser2 is subject to N-acetylserine; in Vesicle-associated protein 1-2, N-terminally processed. Positions 5 to 125 constitute an MSP domain; that stretch reads LLTIDPVDLQ…EETKLRVVYV (121 aa). Residues 123 to 174 are disordered; it reads VYVAPPRPPSPVREGSEEGSSPRASVSDNGNASDFTAAPRFSADRVDAQDNS. Phosphoserine is present on Ser132. Polar residues predominate over residues 140 to 156; sequence EGSSPRASVSDNGNASD. Ser164 is subject to Phosphoserine. Residues 169-215 are a coiled coil; that stretch reads DAQDNSSEARALVTKLTEEKNSAVQLNNRLQQELDQLRRESKRSKSG. The helical; Anchor for type IV membrane protein transmembrane segment at 216-236 threads the bilayer; it reads GIPFMYVLLVGLIGLILGYIM.

Belongs to the VAMP-associated protein (VAP) (TC 9.B.17) family. Interacts with ORP3A. Binds to VLG at the endomembrane system.

It is found in the endoplasmic reticulum membrane. Its function is as follows. Vesicle-associated protein that binds the oxysterol-binding protein ORP3A and allows its targeting to the ER. In Arabidopsis thaliana (Mouse-ear cress), this protein is Vesicle-associated protein 1-2.